The chain runs to 131 residues: Small ribosomal subunit protein uS8 (131 aa).

Belongs to the universal ribosomal protein uS8 family. As to quaternary structure, part of the 30S ribosomal subunit. Contacts proteins S5 and S12.

One of the primary rRNA binding proteins, it binds directly to 16S rRNA central domain where it helps coordinate assembly of the platform of the 30S subunit. The chain is Small ribosomal subunit protein uS8 from Acinetobacter baumannii (strain AB307-0294).